A 363-amino-acid chain; its full sequence is Trichothecene biosynthesis protein 14 (363 aa).

The protein belongs to the TRI14 family.

In terms of biological role, part of the gene cluster that mediates the production of the antimicrobial trichothecene harzianum A (HA) that plays a role in Botrytis cinerea antagonistic activity and plant defense priming. The biosynthesis of harzianum A begins with the cyclization of farnesyl diphosphate to trichodiene and is catalyzed by the trichodiene synthase TRI5. Trichodiene undergoes a series of oxygenations catalyzed by the cytochrome P450 monooxygenase TRI4. TRI4 controls the addition of 3 oxygens at C-2, C-11, and the C-12, C-13-epoxide to form the intermediate isotrichodiol. Isotrichodiol then undergoes a non-enzymatic isomerization and cyclization to form 12,13-epoxytrichothec-9-ene (EPT) which is further converted to trichodermol by the cytochrome P450 monooxygenase TRI11 via C-4 hydroxylation. The last step of HA synthesis is esterification of an octatriendioyl moiety to the C-4 oxygen of trichodermol. The octatriendioyl moiety is probably produced by the polyketide synthase TRI17 and the esterification performed by the trichothecene O-acetyltransferase TRI3. The chain is Trichothecene biosynthesis protein 14 from Trichoderma arundinaceum.